The primary structure comprises 234 residues: MAKLTKRMRVIRDKVDSTKQYDISEAVALLKELATAKFVESVDVAVNLGIDARKSDQNVRGATVLPHGTGRSVRVAVFTQGANAEAAKAAGADLVGMDDLADQIKKGEFNFDVVIASPDAMRVVGQLGQILGPRGLMPNPKVGTVTPNVAEAVKNAKAGQVRYRNDKNGIIHTTIGKVDFESDKLKENLEALLVALKKAKPTQAKGVYIKKVSLSTTMGAGVAVDQSGLSTTTA.

This sequence belongs to the universal ribosomal protein uL1 family. In terms of assembly, part of the 50S ribosomal subunit.

Its function is as follows. Binds directly to 23S rRNA. The L1 stalk is quite mobile in the ribosome, and is involved in E site tRNA release. Functionally, protein L1 is also a translational repressor protein, it controls the translation of the L11 operon by binding to its mRNA. This is Large ribosomal subunit protein uL1 from Sodalis glossinidius (strain morsitans).